Here is a 56-residue protein sequence, read N- to C-terminus: Ribosome modulation factor (56 aa).

It belongs to the ribosome modulation factor family.

It localises to the cytoplasm. Its function is as follows. During stationary phase, converts 70S ribosomes to an inactive dimeric form (100S ribosomes). The sequence is that of Ribosome modulation factor from Proteus mirabilis (strain HI4320).